A 90-amino-acid chain; its full sequence is Probable Fe(2+)-trafficking protein (90 aa).

This sequence belongs to the Fe(2+)-trafficking protein family.

Its function is as follows. Could be a mediator in iron transactions between iron acquisition and iron-requiring processes, such as synthesis and/or repair of Fe-S clusters in biosynthetic enzymes. This chain is Probable Fe(2+)-trafficking protein, found in Methylococcus capsulatus (strain ATCC 33009 / NCIMB 11132 / Bath).